A 587-amino-acid chain; its full sequence is ATP-dependent lipid A-core flippase (587 aa).

5 helical membrane-spanning segments follow: residues 31 to 51, 68 to 88, 145 to 165, 166 to 186, and 259 to 279; these read LIVS…LIYL, LKMM…TNFI, GSLI…AVMF, YTSW…AVLI, and VQVI…TPLI. Positions 32–315 constitute an ABC transmembrane type-1 domain; the sequence is IVSGVALVFN…LTAVNAQFQS (284 aa). In terms of domain architecture, ABC transporter spans 347 to 583; sequence LEFKNVSFAY…NGAYKQLHSM (237 aa). An ATP-binding site is contributed by 381–388; it reads GRSGSGKS.

Belongs to the ABC transporter superfamily. Lipid exporter (TC 3.A.1.106) family. Homodimer.

It localises to the cell inner membrane. The enzyme catalyses ATP + H2O + lipid A-core oligosaccharideSide 1 = ADP + phosphate + lipid A-core oligosaccharideSide 2.. Its function is as follows. Involved in lipopolysaccharide (LPS) biosynthesis. Translocates lipid A-core from the inner to the outer leaflet of the inner membrane. Transmembrane domains (TMD) form a pore in the inner membrane and the ATP-binding domain (NBD) is responsible for energy generation. The sequence is that of ATP-dependent lipid A-core flippase from Haemophilus influenzae (strain ATCC 51907 / DSM 11121 / KW20 / Rd).